The primary structure comprises 282 residues: sn-glycerol-3-phosphate transport system permease protein UgpE (282 aa).

Helical transmembrane passes span 14–34, 86–106, 112–132, 136–156, 201–221, and 248–268; these read LMLIIGIIIVVFPIYYTFVAS, IAIAVGKIVISFLSAFAIVFF, MAFFWMIFITLMLPVEVRILP, VIVDLGLIDTYAGLTLPLMAS, IAALFVILFIYGWTQYLWPLL, and WNYVMVTAILAIIPPVAVVVL. The ABC transmembrane type-1 domain occupies 78 to 269; sequence LFNTFVVAIA…IPPVAVVVLM (192 aa).

It belongs to the binding-protein-dependent transport system permease family. As to quaternary structure, the complex is composed of two ATP-binding proteins (UgpC), two transmembrane proteins (UgpA and UgpE) and a solute-binding protein (UgpB).

Its subcellular location is the cell inner membrane. Functionally, part of the ABC transporter complex UgpBAEC involved in sn-glycerol-3-phosphate (G3P) import. Probably responsible for the translocation of the substrate across the membrane. This is sn-glycerol-3-phosphate transport system permease protein UgpE (ugpE) from Rhizobium meliloti (strain 1021) (Ensifer meliloti).